Here is a 604-residue protein sequence, read N- to C-terminus: Arginine--tRNA ligase (604 aa).

Residues 142-152 (PNIAKEMHVGH) carry the 'HIGH' region motif.

It belongs to the class-I aminoacyl-tRNA synthetase family. As to quaternary structure, monomer.

Its subcellular location is the cytoplasm. It carries out the reaction tRNA(Arg) + L-arginine + ATP = L-arginyl-tRNA(Arg) + AMP + diphosphate. In Prochlorococcus marinus (strain MIT 9312), this protein is Arginine--tRNA ligase.